A 1314-amino-acid polypeptide reads, in one-letter code: Synergin gamma (1314 aa).

Positions 115 to 155 form a coiled coil; that stretch reads MQKQFAEEQQKRFEQQQKLLEEERKRRQFEEQKQKLRLLSS. Positions 178–199 are disordered; that stretch reads GFSRDAKMHPTPASHPKKPGPS. The 94-residue stretch at 295-388 folds into the EH domain; that stretch reads NESLVPDAYK…QFPAAPIPTL (94 aa). The DFXDF motif 1 motif lies at 457–461; sequence DFQDF. Residues 460-498 are disordered; it reads DFQDASKSGSLDDSFSDFQELPASSKTSNSQHGNSAPSL. Over residues 462–496 the composition is skewed to polar residues; it reads QDASKSGSLDDSFSDFQELPASSKTSNSQHGNSAP. Serine 473 carries the post-translational modification Phosphoserine. Lysine 513 is subject to N6-acetyllysine. Positions 518-786 are interaction with AP1G1; the sequence is KGIAADKSSE…ADFHSSKFSS (269 aa). Serine 580 is modified (phosphoserine). Positions 666-678 are interaction with AP1G1, AP1G2 and GGA1; that stretch reads LADDFGEFSLFGE. The short motif at 690-694 is the DFXDF motif 2 element; it reads DFADF. Serine 720 carries the post-translational modification Phosphoserine. Position 744 is an N6-acetyllysine (lysine 744). A phosphoserine mark is found at serine 752 and serine 772. Residues 775 to 779 carry the DFXDF motif 3 motif; the sequence is DFADF. 6 positions are modified to phosphoserine: serine 812, serine 852, serine 855, serine 909, serine 919, and serine 935. 2 disordered regions span residues 972 to 1026 and 1073 to 1102; these read PQTS…DFGE and SLSLGDKEISRSSPSPALEQPFRDRSNTLN. Basic and acidic residues predominate over residues 976-990; it reads EQKEYENRDYKDFTK. Residues 1001–1019 are compositionally biased toward polar residues; it reads EATCPSPASSGASQETPNE. Phosphoserine occurs at positions 1006, 1073, 1075, 1087, and 1098. Threonine 1100 is modified (phosphothreonine).

As to quaternary structure, self-associates. Interacts with GGA1 (via GAE domain). Interacts with GGA2 and GGA3. Interacts with AP1G1 (via GAE domain), a subunit of adapter protein complex AP-1. Interacts with AP1G2 (via GAE domain) a subunit of adapter protein complex AP-1. Component of the aftiphilin/p200/gamma-synergin complex, at least composed of AFTPH/aftiphilin, HEATR5B/p200a and SYNRG/gamma-synergin, which plays a role in the AP1G1/AP-1-mediated trafficking of transferrin from early to recycling endosomes. Within the complex interacts with AFTPH/aftiphilin and HEATR5B/p200a; the interactions are direct. Interacts (via EH domain) with SCAMP1.

The protein resides in the cytoplasm. Its subcellular location is the golgi apparatus. It localises to the trans-Golgi network membrane. The protein localises to the perinuclear region. It is found in the cytoplasmic vesicle. The protein resides in the clathrin-coated vesicle. Functionally, plays a role in endocytosis and/or membrane trafficking at the trans-Golgi network (TGN). May act by linking the adapter protein complex AP-1 to other proteins. Component of clathrin-coated vesicles. Component of the aftiphilin/p200/gamma-synergin complex, which plays roles in AP1G1/AP-1-mediated protein trafficking including the trafficking of transferrin from early to recycling endosomes, and the membrane trafficking of furin and the lysosomal enzyme cathepsin D between the trans-Golgi network (TGN) and endosomes. This chain is Synergin gamma, found in Homo sapiens (Human).